The following is a 556-amino-acid chain: DNA ligase B (556 aa).

Catalysis depends on Lys-124, which acts as the N6-AMP-lysine intermediate.

This sequence belongs to the NAD-dependent DNA ligase family. LigB subfamily.

It catalyses the reaction NAD(+) + (deoxyribonucleotide)n-3'-hydroxyl + 5'-phospho-(deoxyribonucleotide)m = (deoxyribonucleotide)n+m + AMP + beta-nicotinamide D-nucleotide.. Catalyzes the formation of phosphodiester linkages between 5'-phosphoryl and 3'-hydroxyl groups in double-stranded DNA using NAD as a coenzyme and as the energy source for the reaction. This Pseudomonas fluorescens (strain ATCC BAA-477 / NRRL B-23932 / Pf-5) protein is DNA ligase B.